Here is a 1690-residue protein sequence, read N- to C-terminus: MPMSSFKRKIKAIQIKIASPEVIRSWSGGEVKKPETINYRTFKPERDGLFCERIFGPVKDYECACGKYKGKKYEGTVCERCGVRVESREARRKRMGHIELAAPAVHIWYLESIPSVLGTLLNMSTSDLENIIYYGSRRVIERVFIVTDPKDTPFSQGDVIYETEYRIYRKKWDFDVEQAFVVKNPKSPVLSDIDGEVTLKTEKSITGREITWIIVKNITRATHTVLPGMILVVKDGQEVEKGQDLTKEMTIDPVYAPFDGHVEIDELSNTITLKPLTTSKDQPVVFTVPYGAKILVSNGQKVKKGDQITTSTSLPSVKSSISGTVRFGSNLNIRALEDGNFEVLSTGEVYVEQVIEERKYPVFEGALVYVNNGDQVKKGDHLADRFLFEEEYLSATEYKIFESHYPTMFDVEERTENDRPIVVITDIDPEVSKETGLKVGDIVTENEYEAYLQIYPEKIVADAGAQAIKKLLQNLDLEALQAEIEAELKKLPSSSSKAIKLRRRLKMVKDFLKSGNKPEWMVLEVVPVIPPDLRPMIQIEGGRFATTDLNELYRRLINRNNRLKKLLELGAPEIILRNEKRMLQEAVDALIHNGSDSEGKRSRRAVLKDRNGRPLKSLTDLLKGKKGRFRRNLLGKRVDYSGRAVIVVGPNLKIHQCGIPKKMAMELFKPFVLAKLLGEGSSSKTMRKVKKAIIEKEMPEAWEVLEEVIKGSVVLLNRAPTLHRMSIQAFEPKLVEGNAIQLHPVVCPPFNADFDGDQMAVHVPLSAAAQAEARFLMLSRYNIISPAHGKPISLPTQDIIIGSYYLTTVGKEFDSLKEEDVKWKFSSPEEAMLAYHLGFIKLHTPILIKVVINGEEKRIKTTLGRVIFNGILPEDLRDYNRIFDKKQINALVYETFKRHGIDRAADLLDDIKDIGFHYATVSGLTLSLKDLKIPPERDEILRKTWEKVRIIEENYEKGFLTEEQRKSEIIRLWMSVTEEITKLTSKTLAEDPFNPIYMMVNSGARGNIDQVKQLAGIRGLMIKAYDPRSREIKSKIFKGQAIHEALTFDYPVDKNLREGVDILQFFISTYGARKGQVDTAMNTSFAGYLTRRLVDVAQSVTVSEPDCGTHEGIRAMDLIKEGTVVEKMNEFLFGRVLARDVLDPETKEVLKNPETGKEYTRNTMLTDDDANFLASYKKMVDVVRYEEIDITELSLPNMYAEIAEPVGEYEEGTELTWDVVKAAKNEGKYRIKVKVYPVVGTVYAEEEPLYDKKGERQLLVYQEVINEIVAKMLEENGIEKVPVRPDIIVRSPLTCESEYGVCAACYGMDLSNHKIVNVGEAVGIVAAQSIGEPGTQLTMRTFHVGGVMGASDIVSGLTTVEKTFEPYAFLREEKSGGKKEIRKYYGSEAILCEVDGFVKDIATDESGRTVIYIEDYAGNIHAYKVPKRAKVRVEKGQKVLRGETLTSGAIVWWKLLELESEKGVMTAMNLLKIIKNAYVQQGVSIHDKHFEIIFKQMLSMATIVDPGDSDYLPDQLVPLVDIKRFNREILEGNAKVEENRKWVIGKTLAKRIIAETEEGELVELAQKGDEVTEELLKKIIEAGIKEIDVFEKDKVVTYQILPKEPIKYKRRLLSLKKAALNYPGWLSAAAFEETAWVLTAAAIEGKVDPLIGLKENVIVGQLIPAGTGLDVFAGIQVEETPRAAVEEELA.

Zn(2+)-binding residues include C63, C65, C78, and C81. 3 residues coordinate Mg(2+): D753, D755, and D757. Residues C1107, C1295, C1302, and C1305 each contribute to the Zn(2+) site.

Belongs to the RNA polymerase beta' chain family. The RNAP catalytic core consists of 2 alpha, 1 beta, 1 beta' and 1 omega subunit. When a sigma factor is associated with the core the holoenzyme is formed, which can initiate transcription. The cofactor is Mg(2+). It depends on Zn(2+) as a cofactor.

The catalysed reaction is RNA(n) + a ribonucleoside 5'-triphosphate = RNA(n+1) + diphosphate. DNA-dependent RNA polymerase catalyzes the transcription of DNA into RNA using the four ribonucleoside triphosphates as substrates. The sequence is that of DNA-directed RNA polymerase subunit beta' from Thermotoga sp. (strain RQ2).